The primary structure comprises 523 residues: Major facilitator-type transporter psiT2 (523 aa).

Polar residues predominate over residues 1–26 (MSLERSTSPNPTERTSLLSDTASTIS). Residues 1-45 (MSLERSTSPNPTERTSLLSDTASTISSRDDVEQSSLKQRRTPIPT) are disordered. The next 5 membrane-spanning stretches (helical) occupy residues 88–108 (FYSG…IFML), 125–145 (ALGI…TMML), 149–169 (VCAG…SELT), 175–195 (ALVV…GPLI), and 221–241 (FLPS…GYFF). N-linked (GlcNAc...) asparagine glycosylation is present at asparagine 269. 3 helical membrane-spanning segments follow: residues 317–337 (FLMF…FTAV), 352–372 (AFSV…PWVL), and 382–402 (HFCM…NPLA). Asparagine 410 carries N-linked (GlcNAc...) asparagine glycosylation. 3 consecutive transmembrane segments (helical) span residues 419–439 (GLLY…VMAF), 455–474 (LATA…AFCP), and 488–508 (NILG…VGVW).

Belongs to the major facilitator superfamily. TCR/Tet family.

It localises to the membrane. Major facilitator-type transporter; part of the gene cluster that mediates the biosynthesis of psilocybin, a psychotropic tryptamine-derived natural product. This chain is Major facilitator-type transporter psiT2, found in Psilocybe cubensis (Psychedelic mushroom).